A 442-amino-acid chain; its full sequence is MKAHLLLFMRIIYIHRCPLNEVAPPGQVVEVFGKAIQALSRVSDELWLDPSEKGLALRSVNSCRSAYGCVLFSPVFFQHYQWSASVKMNDTDIILNLNCRLGMKSILPIFRCLNSLEKNVEKCKIFTRSDKCKVVIQFFCRHGIKKIHNVCFQGSRPLQVIFQKNMCANTLVIQPRVLAEAIVLFTSSQEEVTLAVTPLKVCIKSSNEESMDLTDSVYSEMFVGPDEFDFFQIGIDTEITFCFKELKGVLTFSEAIHAPIAIHFDFPGKPMALSIDDMLLEANFILATLADEPSRASSLQTLYLSQKQRRSEPIHSNSKAGKNITSKVPEYISRKVEPKRLYSNETPTNISTLENCGSPLMKRANKDITEVPESDGNLSEVPESSVSDTEDVPGSPCLKKFSCMFFGAASSDQQEPFSLPFQSLATASGSEEDMNNGSFSTF.

2 disordered regions span residues 370-392 and 422-442; these read EVPESDGNLSEVPESSVSDTEDV and QSLATASGSEEDMNNGSFSTF. At Ser-387 the chain carries Phosphoserine.

The protein belongs to the rad9 family. As to quaternary structure, interacts with HUS1, HUS1B, RAD1, RAD9A and RAD17.

This chain is Cell cycle checkpoint control protein RAD9B (RAD9B), found in Bos taurus (Bovine).